The following is a 1059-amino-acid chain: Transmembrane protease serine 9 (1059 aa).

Over 1–29 the chain is Cytoplasmic; sequence MEPTVADVHLVPRTTKEVPALDAACCRAA. Residues 30-50 form a helical; Signal-anchor for type II membrane protein membrane-spanning segment; the sequence is SIGVVATSLVVLTLGVLLAFL. Topologically, residues 51 to 1059 are extracellular; the sequence is STQGFHVDHT…RGWIGQHIQE (1009 aa). In terms of domain architecture, LDL-receptor class A spans 153–190; it reads RCPGNSFSCGNSQCVTKVNPECDDQEDCSDGSDEAHCE. Cystine bridges form between Cys154-Cys166, Cys161-Cys180, Cys174-Cys189, and Cys228-Cys244. The Peptidase S1 1 domain occupies 203–436; the sequence is IVGGMEASPG…LRDWILEATT (234 aa). Catalysis depends on charge relay system residues His243 and Asp292. Cystine bridges form between Cys326–Cys393, Cys358–Cys372, and Cys383–Cys412. Ser387 acts as the Charge relay system in catalysis. Positions 443-469 are disordered; the sequence is APTMAPAPAAPSTAWPTSPESPVVSTP. In terms of domain architecture, Peptidase S1 2 spans 504-736; the sequence is VVGGFGAASG…LKGWILEIMS (233 aa). Cys529 and Cys545 are disulfide-bonded. The active-site Charge relay system is His544. N-linked (GlcNAc...) asparagine glycosylation occurs at Asn547. The Charge relay system role is filled by Asp592. 3 disulfide bridges follow: Cys626–Cys693, Cys658–Cys672, and Cys683–Cys712. Asn638 and Asn663 each carry an N-linked (GlcNAc...) asparagine glycan. Ser687 (charge relay system) is an active-site residue. Residues 758-814 form a disordered region; sequence TTAGLTVPGATPSRPTPGAASRVTGQPANSTLSAVSTTARGQTPFPDAPEATTHTQL. Over residues 780–798 the composition is skewed to polar residues; that stretch reads VTGQPANSTLSAVSTTARG. An N-linked (GlcNAc...) asparagine glycan is attached at Asn786. Positions 827 to 1058 constitute a Peptidase S1 3 domain; that stretch reads IVGGSAAGRG…VRGWIGQHIQ (232 aa). 4 cysteine pairs are disulfide-bonded: Cys853-Cys869, Cys949-Cys1015, Cys980-Cys994, and Cys1005-Cys1034.

The protein belongs to the peptidase S1 family. Proteolytically cleaved to generate 3 independent serine protease chains. The cleaved chains may remain attached to the membrane thanks to disulfide bonds. It is unclear whether cleavage always takes place. As to expression, expressed in fetal human tissues, such as kidney, liver, lung and brain, and in a variety of tumor cell lines. Weakly expressed in adult tissues including skeletal muscle, liver, placenta and heart.

The protein resides in the cell membrane. With respect to regulation, inhibited by serine protease inhibitors PMSF and 4-(2-aminoethyl)benzenesulfonyl fluoride, but not by EDTA. Serase-1 and serase-2 are serine proteases that hydrolyze the peptides N-t-Boc-Gln-Ala-Arg-AMC and N-t-Boc-Gln-Gly-Arg-AMC. In contrast, N-t-Boc-Ala-Phe-Lys-AMC and N-t-Boc-Ala-Pro-Ala-AMC are not significantly hydrolyzed. The sequence is that of Transmembrane protease serine 9 (TMPRSS9) from Homo sapiens (Human).